The sequence spans 601 residues: UvrABC system protein C (601 aa).

The 79-residue stretch at 17–95 folds into the GIY-YIG domain; it reads TLPGVYRMLD…IKALAPRYNI (79 aa). The UVR domain occupies 204-239; sequence SELINELTRRMTAAAEAMAFEQAAELRDQIQALARV.

The protein belongs to the UvrC family. In terms of assembly, interacts with UvrB in an incision complex.

It is found in the cytoplasm. The UvrABC repair system catalyzes the recognition and processing of DNA lesions. UvrC both incises the 5' and 3' sides of the lesion. The N-terminal half is responsible for the 3' incision and the C-terminal half is responsible for the 5' incision. This is UvrABC system protein C from Chromobacterium violaceum (strain ATCC 12472 / DSM 30191 / JCM 1249 / CCUG 213 / NBRC 12614 / NCIMB 9131 / NCTC 9757 / MK).